A 155-amino-acid polypeptide reads, in one-letter code: Probable adenylyl-sulfate kinase (155 aa).

Position 9–16 (9–16) interacts with ATP; that stretch reads GPSGAGKT. Residue serine 83 is the Phosphoserine intermediate of the active site. A disordered region spans residues 134 to 155; it reads LDGEYEEPENPEVVVDTDKNDR.

This sequence belongs to the APS kinase family.

It carries out the reaction adenosine 5'-phosphosulfate + ATP = 3'-phosphoadenylyl sulfate + ADP + H(+). It functions in the pathway sulfur metabolism; hydrogen sulfide biosynthesis; sulfite from sulfate: step 2/3. In terms of biological role, catalyzes the synthesis of activated sulfate. The chain is Probable adenylyl-sulfate kinase (cysC) from Archaeoglobus fulgidus (strain ATCC 49558 / DSM 4304 / JCM 9628 / NBRC 100126 / VC-16).